Here is a 513-residue protein sequence, read N- to C-terminus: Maturase K (513 aa).

This sequence belongs to the intron maturase 2 family. MatK subfamily.

The protein resides in the plastid. It localises to the chloroplast. Functionally, usually encoded in the trnK tRNA gene intron. Probably assists in splicing its own and other chloroplast group II introns. The protein is Maturase K of Cynodon dactylon (Bermuda grass).